Reading from the N-terminus, the 418-residue chain is Light-independent protochlorophyllide reductase subunit N (418 aa).

3 residues coordinate [4Fe-4S] cluster: Cys17, Cys42, and Cys103.

Belongs to the BchN/ChlN family. In terms of assembly, protochlorophyllide reductase is composed of three subunits; ChlL, ChlN and ChlB. Forms a heterotetramer of two ChlB and two ChlN subunits. It depends on [4Fe-4S] cluster as a cofactor.

The catalysed reaction is chlorophyllide a + oxidized 2[4Fe-4S]-[ferredoxin] + 2 ADP + 2 phosphate = protochlorophyllide a + reduced 2[4Fe-4S]-[ferredoxin] + 2 ATP + 2 H2O. Its pathway is porphyrin-containing compound metabolism; chlorophyll biosynthesis (light-independent). Component of the dark-operative protochlorophyllide reductase (DPOR) that uses Mg-ATP and reduced ferredoxin to reduce ring D of protochlorophyllide (Pchlide) to form chlorophyllide a (Chlide). This reaction is light-independent. The NB-protein (ChlN-ChlB) is the catalytic component of the complex. This chain is Light-independent protochlorophyllide reductase subunit N, found in Prochlorococcus marinus (strain MIT 9312).